We begin with the raw amino-acid sequence, 283 residues long: Pantothenate synthetase (283 aa).

Residue 30–37 coordinates ATP; sequence MGTLHDGH. H37 (proton donor) is an active-site residue. A (R)-pantoate-binding site is contributed by Q61. Q61 lines the beta-alanine pocket. 148 to 151 lines the ATP pocket; it reads GLKD. Residue Q154 coordinates (R)-pantoate. 185 to 188 serves as a coordination point for ATP; that stretch reads MSSR.

The protein belongs to the pantothenate synthetase family. As to quaternary structure, homodimer.

It is found in the cytoplasm. It catalyses the reaction (R)-pantoate + beta-alanine + ATP = (R)-pantothenate + AMP + diphosphate + H(+). It participates in cofactor biosynthesis; (R)-pantothenate biosynthesis; (R)-pantothenate from (R)-pantoate and beta-alanine: step 1/1. In terms of biological role, catalyzes the condensation of pantoate with beta-alanine in an ATP-dependent reaction via a pantoyl-adenylate intermediate. This is Pantothenate synthetase from Leptospira biflexa serovar Patoc (strain Patoc 1 / Ames).